The chain runs to 170 residues: Peptide deformylase (170 aa).

Cys91 and His133 together coordinate Fe cation. Residue Glu134 is part of the active site. His137 contributes to the Fe cation binding site.

It belongs to the polypeptide deformylase family. Requires Fe(2+) as cofactor.

The catalysed reaction is N-terminal N-formyl-L-methionyl-[peptide] + H2O = N-terminal L-methionyl-[peptide] + formate. Functionally, removes the formyl group from the N-terminal Met of newly synthesized proteins. Requires at least a dipeptide for an efficient rate of reaction. N-terminal L-methionine is a prerequisite for activity but the enzyme has broad specificity at other positions. This is Peptide deformylase from Actinobacillus pleuropneumoniae serotype 7 (strain AP76).